The primary structure comprises 144 residues: Maximins 3/H2 (144 aa).

The signal sequence occupies residues 1–18; sequence MNFKYIVAVSFLIASAYA. 2 consecutive propeptides follow at residues 19–43 and 74–123; these read RSVQ…REIR and TAEE…KEKR. An Isoleucine amide modification is found at I143.

Belongs to the bombinin family. In terms of tissue distribution, expressed by the skin glands.

The protein resides in the secreted. Functionally, maximin-3 shows antibacterial activity against both Gram-positive and Gram-negative bacteria. It also shows antimicrobial activity against the fungus C.albicans, but not against A.flavus nor P.uticale. It has little hemolytic activity. It possess a significant cytotoxicity against tumor cell lines. It possess a significant anti-HIV activity. It shows high spermicidal activity. In terms of biological role, maximin-H2 shows antibacterial activity against both Gram-positive and Gram-negative bacteria. It also shows antimicrobial activity against the fungus C.albicans. Shows strong hemolytic activity. The polypeptide is Maximins 3/H2 (Bombina maxima (Giant fire-bellied toad)).